A 116-amino-acid chain; its full sequence is Anti-sigma F factor antagonist (116 aa).

One can recognise an STAS domain in the interval 3-113 (LAIDLEVKQD…ADEQFALQAL (111 aa)). Residue serine 58 is modified to Phosphoserine.

It belongs to the anti-sigma-factor antagonist family. In terms of processing, phosphorylated by SpoIIAB on a serine residue.

In the phosphorylated form it could act as an anti-anti-sigma factor that counteracts SpoIIAB and thus releases sigma f from inhibition. The protein is Anti-sigma F factor antagonist (spoIIAA) of Geobacillus stearothermophilus (Bacillus stearothermophilus).